Reading from the N-terminus, the 207-residue chain is Large ribosomal subunit protein uL4 (207 aa).

The tract at residues 49–78 (HAVKNRSAVSGGGRKPWRQKGTGRARQGSI) is disordered.

It belongs to the universal ribosomal protein uL4 family. Part of the 50S ribosomal subunit.

In terms of biological role, one of the primary rRNA binding proteins, this protein initially binds near the 5'-end of the 23S rRNA. It is important during the early stages of 50S assembly. It makes multiple contacts with different domains of the 23S rRNA in the assembled 50S subunit and ribosome. Functionally, forms part of the polypeptide exit tunnel. This Streptococcus sanguinis (strain SK36) protein is Large ribosomal subunit protein uL4.